Consider the following 465-residue polypeptide: Cysteine--tRNA ligase (465 aa).

Position 27 (C27) interacts with Zn(2+). The 'HIGH' region motif lies at 29–39; it reads PTVYNYIHIGN. Residues C207, H232, and E236 each coordinate Zn(2+). The 'KMSKS' region signature appears at 264-268; that stretch reads KMSKS. K267 contacts ATP.

The protein belongs to the class-I aminoacyl-tRNA synthetase family. As to quaternary structure, monomer. It depends on Zn(2+) as a cofactor.

Its subcellular location is the cytoplasm. The catalysed reaction is tRNA(Cys) + L-cysteine + ATP = L-cysteinyl-tRNA(Cys) + AMP + diphosphate. This Clostridioides difficile (strain 630) (Peptoclostridium difficile) protein is Cysteine--tRNA ligase.